The following is a 376-amino-acid chain: 23S rRNA (uracil(747)-C(5))-methyltransferase RlmC (376 aa).

The [4Fe-4S] cluster site is built by Cys3, Cys11, Cys14, and Cys87. Residues Gln212, Phe241, Glu262, and Asn307 each coordinate S-adenosyl-L-methionine. The active-site Nucleophile is the Cys334.

This sequence belongs to the class I-like SAM-binding methyltransferase superfamily. RNA M5U methyltransferase family. RlmC subfamily.

It catalyses the reaction uridine(747) in 23S rRNA + S-adenosyl-L-methionine = 5-methyluridine(747) in 23S rRNA + S-adenosyl-L-homocysteine + H(+). Functionally, catalyzes the formation of 5-methyl-uridine at position 747 (m5U747) in 23S rRNA. The polypeptide is 23S rRNA (uracil(747)-C(5))-methyltransferase RlmC (Citrobacter koseri (strain ATCC BAA-895 / CDC 4225-83 / SGSC4696)).